The sequence spans 224 residues: Cytidylate kinase (224 aa).

An ATP-binding site is contributed by 9–17; sequence GPSGSGKGT.

It belongs to the cytidylate kinase family. Type 1 subfamily.

The protein resides in the cytoplasm. The catalysed reaction is CMP + ATP = CDP + ADP. The enzyme catalyses dCMP + ATP = dCDP + ADP. The polypeptide is Cytidylate kinase (Saccharophagus degradans (strain 2-40 / ATCC 43961 / DSM 17024)).